Reading from the N-terminus, the 62-residue chain is Inner membrane protein p12 (62 aa).

A helical transmembrane segment spans residues 16-36; that stretch reads LLIVAIIVVIMAIMLYYFWWM.

It belongs to the asfivirus inner membrane protein p12 family. In terms of assembly, homomultimer; disulfide-linked. Not glycosylated.

It is found in the virion membrane. In African swine fever virus (isolate Tick/Malawi/Lil 20-1/1983) (ASFV), this protein is Inner membrane protein p12.